The primary structure comprises 352 residues: MVFRIASSPYTHNQRQTSRIMLLVLIAALPGIAAQTWFFGWGTLFQIVLAAITALVAEAIVLRLRKQSVASHLQDYSALLTGLLLAVSIPPLAPWWMVVLGTGFAIIIAKQLYGGLGQNPFNPAMIGYVVLLISFPVQMTSWLPPYEIAATTPDMLDTLRMIFTGHTASGGDMTLLRIGIDGISQATPLDTFKTSLRAGHSVEQIMQYPIYSGALAGVGWQWVNLAWLVGGVFLLWQKAIRWHIPVSFLLTLALCAALGWLFSPATLASPQLHLLSGATMLGAFFILTDPVTASTTNRGRLIFGALAGVLVWLIRSFGGYPDGVAFAVLLANITVPLIDYYTRPRVYGHRKG.

4 consecutive transmembrane segments (helical) span residues 20–40 (IMLL…WFFG), 42–62 (GTLF…AIVL), 69–91 (VASH…SIPP), and 123–143 (PAMI…TSWL). At Thr187 the chain carries FMN phosphoryl threonine. 5 helical membrane-spanning segments follow: residues 215 to 235 (LAGV…VFLL), 242 to 262 (WHIP…GWLF), 267 to 287 (LASP…FFIL), 301 to 321 (LIFG…GGYP), and 322 to 342 (DGVA…DYYT).

The protein belongs to the NqrB/RnfD family. In terms of assembly, the complex is composed of six subunits: RsxA, RsxB, RsxC, RsxD, RsxE and RsxG. FMN serves as cofactor.

It is found in the cell inner membrane. In terms of biological role, part of a membrane-bound complex that couples electron transfer with translocation of ions across the membrane. Required to maintain the reduced state of SoxR. The sequence is that of Ion-translocating oxidoreductase complex subunit D from Salmonella choleraesuis (strain SC-B67).